The following is a 203-amino-acid chain: V-type ATP synthase subunit D (203 aa).

Belongs to the V-ATPase D subunit family.

In terms of biological role, produces ATP from ADP in the presence of a proton gradient across the membrane. The polypeptide is V-type ATP synthase subunit D (Streptococcus pneumoniae (strain Hungary19A-6)).